We begin with the raw amino-acid sequence, 213 residues long: Probable GTP-binding protein EngB (213 aa).

Positions 30-204 (SVQSIAFMGR…REFILETLGI (175 aa)) constitute an EngB-type G domain. Residues 38–45 (GRSNSGKS), 65–69 (GKTKL), 83–86 (DLPG), 150–153 (TKID), and 183–185 (ISA) each bind GTP. Residues Ser-45 and Thr-67 each contribute to the Mg(2+) site.

The protein belongs to the TRAFAC class TrmE-Era-EngA-EngB-Septin-like GTPase superfamily. EngB GTPase family. It depends on Mg(2+) as a cofactor.

Its function is as follows. Necessary for normal cell division and for the maintenance of normal septation. This is Probable GTP-binding protein EngB from Leptospira biflexa serovar Patoc (strain Patoc 1 / Ames).